We begin with the raw amino-acid sequence, 1063 residues long: ATP-dependent helicase hrq1 (1063 aa).

Residues 224–243 (TQSRKNQPVPPDSPSIPNDS) are disordered. One can recognise a Helicase ATP-binding domain in the interval 320-503 (INHLWNGFHV…KIFGVDNIKL (184 aa)). Residue 333–340 (TSTSSGKS) participates in ATP binding. Positions 444-447 (DEAH) match the DEAH box motif. The region spanning 539 to 717 (EASKLLIKFA…ELPINIRSDE (179 aa)) is the Helicase C-terminal domain.

This sequence belongs to the helicase family. HRQ1 subfamily. As to quaternary structure, forms heptamer rings. Interacts with rhp14. The cofactor is Mg(2+).

Its subcellular location is the nucleus. It catalyses the reaction Couples ATP hydrolysis with the unwinding of duplex DNA by translocating in the 3'-5' direction.. It carries out the reaction ATP + H2O = ADP + phosphate + H(+). Helicase with 3'-5' helicase activity involved in genome stability. Functions in the nucleotide excision repair (NER) pathway and plays a critical role in DNA interstrand cross-link repair. Unwinds relatively long duplex DNA up to 120-bp and requires a long 3'-tail of at least 70 nucleotides for efficient unwinding of duplex DNA. Shows both processive helicase and DNA strand annealing activities. Affects telomere length by a non-catalytic mechanism, probably through inhibiting telomerase by competing with it for ssDNA binding. The protein is ATP-dependent helicase hrq1 of Schizosaccharomyces pombe (strain 972 / ATCC 24843) (Fission yeast).